A 377-amino-acid chain; its full sequence is Alanine racemase (377 aa).

The active-site Proton acceptor; specific for D-alanine is the Lys37. Lys37 carries the N6-(pyridoxal phosphate)lysine modification. Arg135 contributes to the substrate binding site. The Proton acceptor; specific for L-alanine role is filled by Tyr271. Met319 provides a ligand contact to substrate.

This sequence belongs to the alanine racemase family. Pyridoxal 5'-phosphate is required as a cofactor.

The enzyme catalyses L-alanine = D-alanine. The protein operates within amino-acid biosynthesis; D-alanine biosynthesis; D-alanine from L-alanine: step 1/1. Its function is as follows. Catalyzes the interconversion of L-alanine and D-alanine. May also act on other amino acids. This chain is Alanine racemase (alr), found in Helicobacter pylori (strain P12).